A 212-amino-acid polypeptide reads, in one-letter code: MNSPHSPILCVITDEDTSPLDMVPRALRGGANMIQLRRKTASGRELCRLAEALIPFCRQAGALFIINDRADIALATDADGVHLGQDDLPVAAARQLFGPGKIIGASTSSVDEALKAERNGADYAGFGHIFPTGSKAKGYKPLGPEAISLAAAALRIPLIAIGGITRENAGPLISRGAAGIAVISAVTKAESPEEAARSLMAIMNTTRAGEGT.

4-amino-2-methyl-5-(diphosphooxymethyl)pyrimidine is bound by residues 35–39 and asparagine 67; that span reads QLRRK. Mg(2+)-binding residues include aspartate 68 and aspartate 87. Serine 106 contributes to the 4-amino-2-methyl-5-(diphosphooxymethyl)pyrimidine binding site. 132 to 134 provides a ligand contact to 2-[(2R,5Z)-2-carboxy-4-methylthiazol-5(2H)-ylidene]ethyl phosphate; sequence TGS. Position 135 (lysine 135) interacts with 4-amino-2-methyl-5-(diphosphooxymethyl)pyrimidine. 2-[(2R,5Z)-2-carboxy-4-methylthiazol-5(2H)-ylidene]ethyl phosphate-binding positions include glycine 163 and 183–184; that span reads IS.

It belongs to the thiamine-phosphate synthase family. Mg(2+) is required as a cofactor.

It carries out the reaction 2-[(2R,5Z)-2-carboxy-4-methylthiazol-5(2H)-ylidene]ethyl phosphate + 4-amino-2-methyl-5-(diphosphooxymethyl)pyrimidine + 2 H(+) = thiamine phosphate + CO2 + diphosphate. The enzyme catalyses 2-(2-carboxy-4-methylthiazol-5-yl)ethyl phosphate + 4-amino-2-methyl-5-(diphosphooxymethyl)pyrimidine + 2 H(+) = thiamine phosphate + CO2 + diphosphate. The catalysed reaction is 4-methyl-5-(2-phosphooxyethyl)-thiazole + 4-amino-2-methyl-5-(diphosphooxymethyl)pyrimidine + H(+) = thiamine phosphate + diphosphate. It functions in the pathway cofactor biosynthesis; thiamine diphosphate biosynthesis; thiamine phosphate from 4-amino-2-methyl-5-diphosphomethylpyrimidine and 4-methyl-5-(2-phosphoethyl)-thiazole: step 1/1. Functionally, condenses 4-methyl-5-(beta-hydroxyethyl)thiazole monophosphate (THZ-P) and 2-methyl-4-amino-5-hydroxymethyl pyrimidine pyrophosphate (HMP-PP) to form thiamine monophosphate (TMP). This chain is Thiamine-phosphate synthase, found in Chlorobium luteolum (strain DSM 273 / BCRC 81028 / 2530) (Pelodictyon luteolum).